Here is a 95-residue protein sequence, read N- to C-terminus: Co-chaperonin GroES (95 aa).

It belongs to the GroES chaperonin family. In terms of assembly, heptamer of 7 subunits arranged in a ring. Interacts with the chaperonin GroEL.

The protein resides in the cytoplasm. Together with the chaperonin GroEL, plays an essential role in assisting protein folding. The GroEL-GroES system forms a nano-cage that allows encapsulation of the non-native substrate proteins and provides a physical environment optimized to promote and accelerate protein folding. GroES binds to the apical surface of the GroEL ring, thereby capping the opening of the GroEL channel. The protein is Co-chaperonin GroES of Clostridium acetobutylicum (strain ATCC 824 / DSM 792 / JCM 1419 / IAM 19013 / LMG 5710 / NBRC 13948 / NRRL B-527 / VKM B-1787 / 2291 / W).